Consider the following 461-residue polypeptide: Phosphomethylpyrimidine synthase (461 aa).

Residues N80, M109, Y139, H175, 195–197 (SRG), 236–239 (DSLR), and E275 contribute to the substrate site. H279 lines the Zn(2+) pocket. Y302 is a binding site for substrate. Residue H343 participates in Zn(2+) binding. The [4Fe-4S] cluster site is built by C423, C426, and C431.

This sequence belongs to the ThiC family. [4Fe-4S] cluster is required as a cofactor.

The enzyme catalyses 5-amino-1-(5-phospho-beta-D-ribosyl)imidazole + S-adenosyl-L-methionine = 4-amino-2-methyl-5-(phosphooxymethyl)pyrimidine + CO + 5'-deoxyadenosine + formate + L-methionine + 3 H(+). It functions in the pathway cofactor biosynthesis; thiamine diphosphate biosynthesis. Its function is as follows. Catalyzes the synthesis of the hydroxymethylpyrimidine phosphate (HMP-P) moiety of thiamine from aminoimidazole ribotide (AIR) in a radical S-adenosyl-L-methionine (SAM)-dependent reaction. The chain is Phosphomethylpyrimidine synthase from Picosynechococcus sp. (strain ATCC 27264 / PCC 7002 / PR-6) (Agmenellum quadruplicatum).